Consider the following 521-residue polypeptide: Non-specific phospholipase C5 (521 aa).

Positions 478–487 are enriched in basic and acidic residues; sequence SKKARERGGD. The disordered stretch occupies residues 478–521; that stretch reads SKKARERGGDENDIVFCVDDDDDHNVVKPPPSQSEPSHATPWSN. Residues 511 to 521 are compositionally biased toward polar residues; that stretch reads SEPSHATPWSN.

Belongs to the bacterial phospholipase C family. As to expression, specifically expressed in flowers.

The protein resides in the cytoplasm. It localises to the cytosol. It catalyses the reaction a 1,2-diacyl-sn-glycero-3-phosphocholine + H2O = phosphocholine + a 1,2-diacyl-sn-glycerol + H(+). Non-specific phospholipase C (PLC) which assumes minor PLC activity during inorganic phosphate starvation. Can hydrolyze both phosphatidylcholine (PC) and phosphatidylethanolamine (PE). Required for normal accumulation of digalactosyldiacylglycerol (DGDG) during phosphate limitation and may contribute to the conversion of phospholipids to diacylglycerol, the substrate for galactolipid synthesis. This chain is Non-specific phospholipase C5 (NPC5), found in Arabidopsis thaliana (Mouse-ear cress).